Consider the following 424-residue polypeptide: Inhibin beta A chain (424 aa).

The signal sequence occupies residues 1–20 (MPLLWLRGFLLASCWIIVRS). A propeptide spanning residues 21–308 (SPTPGSEGPG…EDHPHRRRRR (288 aa)) is cleaved from the precursor. The N-linked (GlcNAc...) asparagine glycan is linked to asparagine 165. The segment at 257–288 (KKKKKEEEGEGKKKDGGDGGAGADEDKEQSHR) is disordered. The span at 261–273 (KEEEGEGKKKDGG) shows a compositional bias: basic and acidic residues. 4 disulfides stabilise this stretch: cysteine 312/cysteine 320, cysteine 319/cysteine 389, cysteine 348/cysteine 421, and cysteine 352/cysteine 423.

Belongs to the TGF-beta family. As to quaternary structure, dimeric, linked by one or more disulfide bonds. Inhibin A is a dimer of alpha/INHA and beta-A/INHBA. Activin A is a homodimer of beta-A/INHBA. Activin AB is a dimer of beta-A/INHBA and beta-B/INHBB. Interacts with FST and FSTL3; these interactions prevent activin A interaction to its type II receptor. Activin A interacts with ACVR2A. Activin A interacts with BMPR2. Inhibin A interacts with ACVR1; this interaction creates a non-signaling complex (NSC) that inhibits ACVR1-mediated BMP signaling. Inhibin A interacts with ACVR2A.

It is found in the secreted. Its function is as follows. Inhibins/activins are involved in regulating a number of diverse functions such as hypothalamic and pituitary hormone secretion, gonadal hormone secretion, germ cell development and maturation, erythroid differentiation, insulin secretion, nerve cell survival, embryonic axial development or bone growth, depending on their subunit composition. In terms of biological role, activin A is a homodimer of INHBA that plays a role in several essential biological processes including embryonic development, stem cell maintenance and differentiation, haematopoiesis, cell proliferation and tissue fibrosis. Signals through type I (such as ACVR1B or ACVR1C) and type II receptors (such as ACVR2A, ACVR2B or BMPR2) which, upon ligand binding, phosphorylate SMAD2 and SMAD3 intracellular signaling mediators that form a complex with SMAD4, translocate to the nucleus and modulate gene expression. Can also activate alternative non-canonical intracellular signaling pathways including the p38 MAPK, extracellular signal-regulated kinases 1/2 (ERK1/2) and c-Jun N-terminal kinases (JNKs) to modulate cell migration and differentiation. Alternatively, promotes osteoblastic differentiation via ACVRL1-SMAD1/5/9 pathway. In addition, can engage the type I receptor ACVR1 to form an ACVR1-activin A-type II receptor non-signaling complex (NSC) that renders receptors unavailable for engagement with BMPs, hence resulting in an apparent inhibition of ACVR1-mediated BMP signaling. Inhibin A is a dimer of alpha/INHA and beta-A/INHBA that functions as a feedback regulator in the hypothalamic-pituitary-gonadal (HPG) axis. Inhibits the secretion of FSH from the anterior pituitary gland by acting on pituitary gonadotrope cells. Antagonizes activin A by binding to the proteoglycan, betaglycan, and forming a stable complex with and, thereby, sequestering type II activin receptors while excluding type I receptor. The chain is Inhibin beta A chain (INHBA) from Felis catus (Cat).